Here is a 291-residue protein sequence, read N- to C-terminus: uncharacterized protein (291 aa).

2 helical membrane-spanning segments follow: residues 42–62 and 86–106; these read IFFF…RALW and TIFP…LALD.

This sequence belongs to the cytochrome c oxidase subunit 2 family.

Its subcellular location is the mitochondrion membrane. This is an uncharacterized protein from Arabidopsis thaliana (Mouse-ear cress).